Reading from the N-terminus, the 183-residue chain is Pyruvoyl-dependent arginine decarboxylase 2 (183 aa).

At S41 the chain carries Pyruvic acid (Ser).

Belongs to the PdaD family. Pyruvate is required as a cofactor.

It catalyses the reaction L-arginine + H(+) = agmatine + CO2. The chain is Pyruvoyl-dependent arginine decarboxylase 2 (pdaD2) from Methanosarcina mazei (strain ATCC BAA-159 / DSM 3647 / Goe1 / Go1 / JCM 11833 / OCM 88) (Methanosarcina frisia).